The following is a 398-amino-acid chain: SEC12-like protein 1 (398 aa).

At Met-1 the chain carries N-acetylmethionine. At 1-337 (MEIEEASRES…TVPKEWKEWQ (337 aa)) the chain is on the cytoplasmic side. 5 WD repeats span residues 71–110 (DSDGDPVAVSVHPGGDYFVCSTSKGGCKLFELVGGATGIT), 120–159 (QNAGLQKCMAFSFDGSKLAVGGVDGCLRIMEWPNLSVILD), 162–201 (KAHKSIRDMDFSLDSEFLATTSTDGSARIWKAEDGFPLST), 252–291 (LSRKTASTMAVSLDGKYIALGGKDGDVSVAEVKTMEIYHY), and 296–334 (HLGQSIASLEFCPSERVMLTTSSEWGEMVTKLTVPKEWK). Residues 338 to 358 (IYALLFCLFMASVIAAYVFFE) traverse the membrane as a helical segment. The Lumenal portion of the chain corresponds to 359 to 398 (NSDSFWKLPMGKDQKRPKISLFGGSSSTPSEDHSRWNLDL).

In terms of tissue distribution, ubiquitous with higher levels in flowers, roots and senescing leaves.

It is found in the endoplasmic reticulum membrane. Involved in Pi uptake by facilitating the trafficking of PHT1-1/PHT1;1 from the endoplasmic reticulum to the plasma membrane. This Arabidopsis thaliana (Mouse-ear cress) protein is SEC12-like protein 1 (PHF1).